The chain runs to 388 residues: Protein FAM199X (388 aa).

A compositionally biased stretch (low complexity) spans 288 to 312 (SMVSSASSSGSSVGNSASNSSANMS). Positions 288–358 (SMVSSASSSG…QLKEQRQARK (71 aa)) are disordered. Residues S316 and S321 each carry the phosphoserine modification. Residues 330 to 349 (DSKKRSKQRKLQQKAFRKRQ) are compositionally biased toward basic residues.

This sequence belongs to the FAM199 family.

This is Protein FAM199X (Fam199x) from Mus musculus (Mouse).